A 555-amino-acid chain; its full sequence is Bifunctional epoxide hydrolase 2 (555 aa).

A phosphatase region spans residues 1 to 224; it reads MTLRAAVFDL…KVTGIQLLNT (224 aa). Mg(2+)-binding residues include D9 and D11. At K43 the chain carries N6-acetyllysine. Position 55 is an N6-succinyllysine (K55). Residue 123 to 124 coordinates phosphate; that stretch reads TN. Position 185 (D185) interacts with Mg(2+). Residues K191 and K215 each carry the N6-acetyllysine modification. An epoxide hydrolase region spans residues 235 to 555; it reads SDMSHGYVTV…ARNPPVVSKM (321 aa). An AB hydrolase-1 domain is found at 259–531; the sequence is PAVCLCHGFP…CGHWTQMDKP (273 aa). The Nucleophile role is filled by D335. Phosphoserine is present on S370. Residue Y383 participates in substrate binding. 2 positions are modified to N6-succinyllysine: K421 and K455. The active-site Proton donor is the Y466. C522 carries the S-(15-deoxy-Delta12,14-prostaglandin J2-9-yl)cysteine lipid modification. The active-site Proton acceptor is the H524. Positions 553-555 match the Microbody targeting signal motif; that stretch reads SKM. An N6-succinyllysine modification is found at K554.

This sequence belongs to the AB hydrolase superfamily. Epoxide hydrolase family. As to quaternary structure, homodimer. Mg(2+) is required as a cofactor. In terms of processing, the N-terminus is blocked. The covalent modification of cysteine by 15-deoxy-Delta12,14-prostaglandin-J2 is autocatalytic and reversible. It may occur as an alternative to other cysteine modifications, such as S-nitrosylation and S-palmitoylation.

Its subcellular location is the cytoplasm. The protein localises to the peroxisome. It catalyses the reaction an epoxide + H2O = an ethanediol. It carries out the reaction (9S,10S)-10-hydroxy-9-(phosphooxy)octadecanoate + H2O = (9S,10S)-9,10-dihydroxyoctadecanoate + phosphate. The enzyme catalyses 12-phosphooxy-(9Z)-octadecenoate + H2O = 12-hydroxy-(9Z)-octadecenoate + phosphate. The catalysed reaction is 12-phosphooxy-(9E)-octadecenoate + H2O = 12-hydroxy-(9E)-octadecenoate + phosphate. It catalyses the reaction 12-(phosphooxy)octadecanoate + H2O = 12-hydroxyoctadecanoate + phosphate. It carries out the reaction 8,9-epoxy-(5Z,11Z,14Z)-eicosatrienoate + H2O = 8,9-dihydroxy-(5Z,11Z,14Z)-eicosatrienoate. The enzyme catalyses 11,12-epoxy-(5Z,8Z,14Z)-eicosatrienoate + H2O = 11,12-dihydroxy-(5Z,8Z,14Z)-eicosatrienoate. The catalysed reaction is 14,15-epoxy-(5Z,8Z,11Z)-eicosatrienoate + H2O = 14,15-dihydroxy-(5Z,8Z,11Z)-eicosatrienoate. It catalyses the reaction 9,10-epoxy-(12Z)-octadecenoate + H2O = 9,10-dihydroxy-(12Z)-octadecenoate. It carries out the reaction 8-hydroxy-(11S,12S)-epoxy-(5Z,9E,14Z)-eicosatrienoate + H2O = (8,11R,12S)-trihydroxy-(5Z,9E,14Z)-eicosatrienoate. The enzyme catalyses 10-hydroxy-(11S,12S)-epoxy- (5Z,8Z,14Z)-eicosatrienoate + H2O = (10,11S,12R)-trihydroxy-(5Z,8Z,14Z)-eicosatrienoate. The catalysed reaction is 1-tetradecanoyl-sn-glycerol 3-phosphate + H2O = 1-tetradecanoyl-sn-glycerol + phosphate. It catalyses the reaction 1-octadecanoyl-sn-glycero-3-phosphate + H2O = 1-octadecanoyl-sn-glycerol + phosphate. It carries out the reaction 1-(5Z,8Z,11Z,14Z-eicosatetraenoyl)-sn-glycero-3-phosphate + H2O = 1-(5Z,8Z,11Z,14Z-eicosatetraenoyl)-sn-glycerol + phosphate. The enzyme catalyses 1-hexadecanoyl-sn-glycero-3-phosphate + H2O = 1-hexadecanoyl-sn-glycerol + phosphate. The catalysed reaction is 1-(9Z-octadecenoyl)-sn-glycero-3-phosphate + H2O = 1-(9Z-octadecenoyl)-sn-glycerol + phosphate. It catalyses the reaction (8S,9R)-epoxy-(5Z,11Z,14Z)-eicosatrienoate + H2O = (8S,9S)-dihydroxy-(5Z,11Z,14Z)-eicosatrienoate. It carries out the reaction (11S,12R)-epoxy-(5Z,8Z,14Z)-eicosatrienoate + H2O = (11R,12R)-dihydroxy-(5Z,8Z,14Z)-eicosatrienoate. The enzyme catalyses (11S,12R)-epoxy-(5Z,8Z,14Z)-eicosatrienoate + H2O = (11S,12S)-dihydroxy-(5Z,8Z,14Z)-eicosatrienoate. The catalysed reaction is (14S,15R)-epoxy-(5Z,8Z,11Z)-eicosatrienoate + H2O = (14R,15R)-dihydroxy-(5Z,8Z,11Z)-eicosatrienoate. It catalyses the reaction (14S,15R)-epoxy-(5Z,8Z,11Z)-eicosatrienoate + H2O = (14S,15S)-dihydroxy-(5Z,8Z,11Z)-eicosatrienoate. It carries out the reaction (11R,12S)-epoxy-(5Z,8Z,14Z)-eicosatrienoate + H2O = (11S,12S)-dihydroxy-(5Z,8Z,14Z)-eicosatrienoate. The enzyme catalyses (11R,12S)-epoxy-(5Z,8Z,14Z)-eicosatrienoate + H2O = (11R,12R)-dihydroxy-(5Z,8Z,14Z)-eicosatrienoate. The catalysed reaction is (8S,9R)-epoxy-(5Z,11Z,14Z)-eicosatrienoate + H2O = (8R,9R)-dihydroxy-(5Z,11Z,14Z)-eicosatrienoate. It catalyses the reaction (14R,15S)-epoxy-(5Z,8Z,11Z)-eicosatrienoate + H2O = (14R,15R)-dihydroxy-(5Z,8Z,11Z)-eicosatrienoate. With respect to regulation, inhibited by 1-(1-acetylpiperidin-4-yl)-3-(4-(trifl uoromethoxy)phenyl)urea (TPAU), 1-cyclohexyl-3-dodecylurea (CDU), 12-(3-adamantan-1-yl-ureido)-dodecanoic acid (AUDA), 1-((3S, 5S, 7S)-adamantan-1-yl)-3-(5-(2-(2-ethoxyethoxy) ethoxy)pentyl)urea (AEPU), N-adamantyl-N[']-cyclohexyl urea (ACU), 4-(((1S, 4S)-4-(3-((3S, 5S, 7S)-adamantan-1-yl) ureido)cyclohexyl)oxy)benzoic acid (c-AUCB), 4-(((1R, 4R)-4-(3-((3S, 5S, 7S)-adamantan-1-yl)ureido)cyclohexyl)oxy)benzoic acid (t-AUCB), 4-(((1R, 4R)-4-(3-(4(trifluoromethoxy)phenyl)ureido)cyclohexyl)oxy)benzoic acid (t-TAUCB) and to a lesser extent by 8-(3-((3S, 5S, 7S)-adamantan-1-yl)ureido) octanoic acid (AUOA). Phosphatase activity is inhibited by dodecyl-phosphate, phospholipids such as phospho-lysophosphatidic acids and fatty acids such as palmitic acid and lauric acid. In terms of biological role, bifunctional enzyme. The C-terminal domain has epoxide hydrolase activity and acts on epoxides (alkene oxides, oxiranes) and arene oxides. Plays a role in xenobiotic metabolism by degrading potentially toxic epoxides. Also determines steady-state levels of physiological mediators. Its function is as follows. Bifunctional enzyme. The N-terminal domain has lipid phosphatase activity, with the highest activity towards threo-9,10-phosphonooxy-hydroxy-octadecanoic acid, followed by erythro-9,10-phosphonooxy-hydroxy-octadecanoic acid, 12-phosphonooxy-octadec-9Z-enoic acid and 12-phosphonooxy-octadec-9E-enoic acid. Has phosphatase activity toward lyso-glycerophospholipids with also some lower activity toward lysolipids of sphingolipid and isoprenoid phosphates. The polypeptide is Bifunctional epoxide hydrolase 2 (Homo sapiens (Human)).